The primary structure comprises 270 residues: Putative pyruvate, phosphate dikinase regulatory protein (270 aa).

ADP is bound at residue G148–T155.

The protein belongs to the pyruvate, phosphate/water dikinase regulatory protein family. PDRP subfamily.

It catalyses the reaction N(tele)-phospho-L-histidyl/L-threonyl-[pyruvate, phosphate dikinase] + ADP = N(tele)-phospho-L-histidyl/O-phospho-L-threonyl-[pyruvate, phosphate dikinase] + AMP + H(+). It carries out the reaction N(tele)-phospho-L-histidyl/O-phospho-L-threonyl-[pyruvate, phosphate dikinase] + phosphate + H(+) = N(tele)-phospho-L-histidyl/L-threonyl-[pyruvate, phosphate dikinase] + diphosphate. Functionally, bifunctional serine/threonine kinase and phosphorylase involved in the regulation of the pyruvate, phosphate dikinase (PPDK) by catalyzing its phosphorylation/dephosphorylation. The sequence is that of Putative pyruvate, phosphate dikinase regulatory protein from Bacillus cytotoxicus (strain DSM 22905 / CIP 110041 / 391-98 / NVH 391-98).